Consider the following 152-residue polypeptide: Ribosome maturation factor RimP (152 aa).

This sequence belongs to the RimP family.

It localises to the cytoplasm. Functionally, required for maturation of 30S ribosomal subunits. This is Ribosome maturation factor RimP from Desulfitobacterium hafniense (strain Y51).